The following is a 27-amino-acid chain: Potassium channel toxin alpha-KTx 9.11 (27 aa).

Intrachain disulfides connect cysteine 3-cysteine 19, cysteine 6-cysteine 23, and cysteine 10-cysteine 25.

This sequence belongs to the short scorpion toxin superfamily. Potassium channel inhibitor family. Alpha-KTx 09 subfamily. Expressed by the venom gland.

It localises to the secreted. In terms of biological role, may play a role in blocking voltage-gated potassium channels Kv1.2/KCNA2, Kv1.3/KCNA3 and Kv1.6/KCNA6 to a lesser extent. The chain is Potassium channel toxin alpha-KTx 9.11 from Mesobuthus gibbosus (Mediterranean checkered scorpion).